Here is a 726-residue protein sequence, read N- to C-terminus: Type VI secretion system spike protein VgrG1c (726 aa).

Residues 502 to 522 are disordered; the sequence is ANATQSGTKSRSSKGGTPANF. Residues 507–518 show a composition bias toward low complexity; it reads SGTKSRSSKGGT.

The protein belongs to the VgrG protein family. In terms of assembly, forms homomultimers. Part of the type VI secretion system (T6SS).

It is found in the secreted. Its function is as follows. Part of the H1 type VI secretion system (H1-T6SS) specialized secretion system, which delivers several virulence factors in both prokaryotic and eukaryotic cells during infection. Allows the delivery of the Tse5/RhsP1 toxin to target cells where it exerts its toxicity. In Pseudomonas aeruginosa (strain ATCC 15692 / DSM 22644 / CIP 104116 / JCM 14847 / LMG 12228 / 1C / PRS 101 / PAO1), this protein is Type VI secretion system spike protein VgrG1c.